Here is a 194-residue protein sequence, read N- to C-terminus: Imidazoleglycerol-phosphate dehydratase (194 aa).

The protein belongs to the imidazoleglycerol-phosphate dehydratase family.

The protein localises to the cytoplasm. It carries out the reaction D-erythro-1-(imidazol-4-yl)glycerol 3-phosphate = 3-(imidazol-4-yl)-2-oxopropyl phosphate + H2O. It participates in amino-acid biosynthesis; L-histidine biosynthesis; L-histidine from 5-phospho-alpha-D-ribose 1-diphosphate: step 6/9. This is Imidazoleglycerol-phosphate dehydratase from Streptococcus mutans serotype c (strain ATCC 700610 / UA159).